The following is a 264-amino-acid chain: Major prion protein 1 (264 aa).

A signal peptide spans 1–24 (MVKSHIGSWILVLFVAMWSDVALC). An interaction with GRB2, ERI3 and SYN1 region spans residues 25–241 (KKRPKPGGGW…ESEAYYQRGA (217 aa)). The disordered stretch occupies residues 28–118 (PKPGGGWNTG…QWNKPSKPKT (91 aa)). A run of 6 repeats spans residues 54–62 (SQGGGGWGQ), 63–70 (PHGGGWGQ), 71–78 (PHGGGWGQ), 79–86 (PHGGGWGQ), 87–94 (PHGGGWGQ), and 95–103 (PHGGGGWGQ). Positions 54–103 (SQGGGGWGQPHGGGWGQPHGGGWGQPHGGGWGQPHGGGWGQPHGGGGWGQ) are 6 X 8 AA tandem repeats of P-H-G-G-G-W-G-Q. Residues 55–107 (QGGGGWGQPHGGGWGQPHGGGWGQPHGGGWGQPHGGGWGQPHGGGGWGQGGTH) show a composition bias toward gly residues. Cu(2+) contacts are provided by His72, Gly73, Gly74, His80, Gly81, Gly82, His88, Gly89, Gly90, His96, Gly98, and Gly99. The cysteines at positions 190 and 225 are disulfide-linked. N-linked (GlcNAc...) asparagine glycosylation is found at Asn192 and Asn208. Ala241 is lipidated: GPI-anchor amidated alanine. The propeptide at 242–264 (SVILFSSPPVILLISFLIFLIVG) is removed in mature form.

This sequence belongs to the prion family. In terms of assembly, monomer and homodimer. Has a tendency to aggregate into amyloid fibrils containing a cross-beta spine, formed by a steric zipper of superposed beta-strands. Soluble oligomers may represent an intermediate stage on the path to fibril formation. Copper binding may promote oligomerization. Interacts with GRB2, APP, ERI3/PRNPIP and SYN1. Mislocalized cytosolically exposed PrP interacts with MGRN1; this interaction alters MGRN1 subcellular location and causes lysosomal enlargement. Interacts with KIAA1191.

The protein localises to the cell membrane. Its subcellular location is the golgi apparatus. Its function is as follows. Its primary physiological function is unclear. Has cytoprotective activity against internal or environmental stresses. May play a role in neuronal development and synaptic plasticity. May be required for neuronal myelin sheath maintenance. May play a role in iron uptake and iron homeostasis. Soluble oligomers are toxic to cultured neuroblastoma cells and induce apoptosis (in vitro). Association with GPC1 (via its heparan sulfate chains) targets PRNP to lipid rafts. Also provides Cu(2+) or Zn(2+) for the ascorbate-mediated GPC1 deaminase degradation of its heparan sulfate side chains. The chain is Major prion protein 1 from Tragelaphus strepsiceros (Greater kudu).